An 81-amino-acid polypeptide reads, in one-letter code: MLRQILSQAKKHPSLIPLFVFIGTGASGATLYLLRLALFNPDVCWDRNNPEPWNKLGPNDQYKFYSVNVDYSKLKKERPDF.

The Mitochondrial matrix segment spans residues 1 to 14; the sequence is MLRQILSQAKKHPS. K10 is subject to N6-acetyllysine. The chain crosses the membrane as a helical span at residues 15–37; sequence LIPLFVFIGTGASGATLYLLRLA. The Mitochondrial intermembrane segment spans residues 38–81; sequence LFNPDVCWDRNNPEPWNKLGPNDQYKFYSVNVDYSKLKKERPDF. Position 66 is a phosphoserine (S66).

This sequence belongs to the complex IV NDUFA4 subunit family. As to quaternary structure, component of the cytochrome c oxidase (complex IV, CIV), a multisubunit enzyme composed of 14 subunits. The complex is composed of a catalytic core of 3 subunits MT-CO1, MT-CO2 and MT-CO3, encoded in the mitochondrial DNA, and 11 supernumerary subunits COX4I, COX5A, COX5B, COX6A, COX6B, COX6C, COX7A, COX7B, COX7C, COX8 and NDUFA4, which are encoded in the nuclear genome. The complex exists as a monomer or a dimer and forms supercomplexes (SCs) in the inner mitochondrial membrane with NADH-ubiquinone oxidoreductase (complex I, CI) and ubiquinol-cytochrome c oxidoreductase (cytochrome b-c1 complex, complex III, CIII), resulting in different assemblies (supercomplex SCI(1)III(2)IV(1) and megacomplex MCI(2)III(2)IV(2)). Interacts with RAB5IF. Interacts with FLVCR2; this interaction occurs in the absence of heme and is disrupted upon heme binding.

It is found in the mitochondrion inner membrane. In terms of biological role, component of the cytochrome c oxidase, the last enzyme in the mitochondrial electron transport chain which drives oxidative phosphorylation. The respiratory chain contains 3 multisubunit complexes succinate dehydrogenase (complex II, CII), ubiquinol-cytochrome c oxidoreductase (cytochrome b-c1 complex, complex III, CIII) and cytochrome c oxidase (complex IV, CIV), that cooperate to transfer electrons derived from NADH and succinate to molecular oxygen, creating an electrochemical gradient over the inner membrane that drives transmembrane transport and the ATP synthase. Cytochrome c oxidase is the component of the respiratory chain that catalyzes the reduction of oxygen to water. Electrons originating from reduced cytochrome c in the intermembrane space (IMS) are transferred via the dinuclear copper A center (CU(A)) of subunit 2 and heme A of subunit 1 to the active site in subunit 1, a binuclear center (BNC) formed by heme A3 and copper B (CU(B)). The BNC reduces molecular oxygen to 2 water molecules unsing 4 electrons from cytochrome c in the IMS and 4 protons from the mitochondrial matrix. NDUFA4 is required for complex IV maintenance. The polypeptide is Cytochrome c oxidase subunit NDUFA4 (NDUFA4) (Pongo pygmaeus (Bornean orangutan)).